Consider the following 90-residue polypeptide: Putative transcript Y 12 protein (90 aa).

The chain is Putative transcript Y 12 protein (TTTY12) from Homo sapiens (Human).